The primary structure comprises 90 residues: Molybdopterin synthase sulfur carrier subunit (90 aa).

Position 90 is a 1-thioglycine; alternate (Gly-90). Gly-90 is subject to Glycyl adenylate; alternate.

Belongs to the MoaD family. MOCS2A subfamily. Heterotetramer; composed of 2 small (Mocs2A) and 2 large (Mocs2B) subunits. In terms of processing, C-terminal thiocarboxylation occurs in 2 steps, it is first acyl-adenylated (-COAMP) via the hesA/moeB/thiF part of MOCS3, then thiocarboxylated (-COSH) via the rhodanese domain of MOCS3.

The protein localises to the cytoplasm. Its pathway is cofactor biosynthesis; molybdopterin biosynthesis. Functionally, acts as a sulfur carrier required for molybdopterin biosynthesis. Component of the molybdopterin synthase complex that catalyzes the conversion of precursor Z into molybdopterin by mediating the incorporation of 2 sulfur atoms into precursor Z to generate a dithiolene group. In the complex, serves as sulfur donor by being thiocarboxylated (-COSH) at its C-terminus by MOCS3. After interaction with Mocs2B, the sulfur is then transferred to precursor Z to form molybdopterin. The polypeptide is Molybdopterin synthase sulfur carrier subunit (Drosophila ananassae (Fruit fly)).